Here is a 111-residue protein sequence, read N- to C-terminus: NADH-ubiquinone oxidoreductase chain 4 (111 aa).

The chain crosses the membrane as a helical span at residues 35–55 (LITSLFSWLDITVFLTGLSAF).

The protein belongs to the complex I subunit 4 family.

It is found in the mitochondrion membrane. It carries out the reaction a ubiquinone + NADH + 5 H(+)(in) = a ubiquinol + NAD(+) + 4 H(+)(out). Its function is as follows. Core subunit of the mitochondrial membrane respiratory chain NADH dehydrogenase (Complex I) that is believed to belong to the minimal assembly required for catalysis. Complex I functions in the transfer of electrons from NADH to the respiratory chain. The immediate electron acceptor for the enzyme is believed to be ubiquinone. The polypeptide is NADH-ubiquinone oxidoreductase chain 4 (MT-ND4) (Caiman crocodilus (Spectacled caiman)).